A 2111-amino-acid polypeptide reads, in one-letter code: Fatty acid synthase beta subunit aflB (2111 aa).

An acetyltransferase (AT) domain region spans residues 200 to 565 (IVTVFNGQGV…KAGTAARVIL (366 aa)). Residues 618–863 (SRALGLPPVM…AIVDTPGVPD (246 aa)) form an enoyl reductase (ER) domain region. Positions 1195–1688 (GTKPSWRKAL…SPGETLLVDI (494 aa)) are dehydratase (DH) domain. Residues 1606-1708 (EMPTSSDQYA…IVVATARSES (103 aa)) form the MaoC-like domain. Residues 1727-2091 (YLFTGQGSQK…FENVLAISES (365 aa)) are malonyl/palmitoyl transferase (MT/PT) domain.

This sequence belongs to the fungal fatty acid synthetase subunit beta family. [Alpha(6)beta(6)] hexamers of two multifunctional subunits (alpha and beta).

The enzyme catalyses acetyl-CoA + n malonyl-CoA + 2n NADPH + 4n H(+) = a long-chain-acyl-CoA + n CoA + n CO2 + 2n NADP(+).. It catalyses the reaction holo-[ACP] + acetyl-CoA = acetyl-[ACP] + CoA. It carries out the reaction holo-[ACP] + malonyl-CoA = malonyl-[ACP] + CoA. The catalysed reaction is a (3R)-hydroxyacyl-[ACP] = a (2E)-enoyl-[ACP] + H2O. The enzyme catalyses a 2,3-saturated acyl-[ACP] + NAD(+) = a (2E)-enoyl-[ACP] + NADH + H(+). It catalyses the reaction (9Z)-octadecenoyl-[ACP] + H2O = (9Z)-octadecenoate + holo-[ACP] + H(+). Its pathway is secondary metabolite biosynthesis. Fatty acid synthase beta subunit; part of the gene cluster that mediates the biosynthesis of aspercryptins, linear lipopeptides built from six amino acids including 2 highly unusual and nonproteogenic amino acids, 2-amino-octanoic acid (2aoa) and 2-amino-dodecanol (2adol). The core structure of aspercryptins is as follows: Ser/Ala-Thr-Ile/Val-2aoa-Asn-2adol. The first step of aspercryptin biosynthesis is the generation of the fatty acid precursors, octanoic and dodecanoic acids, by the FAS subunits atnF and atnM. The fatty acid precursors are likely transformed into the corresponding alpha-amino fatty acids in three steps. First, they are hydroxylated by the cytochrome P450 monooxygenase atnE, then oxidized to the corresponding alpha-keto acids by the NAD(P)-dependent oxidoreductase atnD, and finally converted to the alpha-amino fatty acids by the PLP-dependent aminotransferases atnH or atnJ. the alpha-amino fatty acids, 2-amino-octanoic and 2-amino-dodecanoic acids, are recognized, activated, and covalently tethered to the NRPS atnA by its fourth and sixth adenylation domains. The second module of atnA is the Thr module and contains an epimerase (E) domain responsible for the epimerization of Thr to D-allo-Thr. Additionally, despite atnA having only one epimerase domain, the first amino acid of aspercryptin A1 is D-Ser, suggesting that serine is either loaded directly as D-Ser on the first module or that the epimerase domain in the threonine module epimerizes both L-Ser and L-Thr. After condensation of the hexapeptide of aspercryptin, the C-terminal reductase (TE) domain might be involved in the reductive release and production of the aldehyde hexapeptide. Further reduction would generate aspercryptins. The variety of aspercryptins produced reflects the flexibility of the atnA NRPS, allowing incorporation of alanine instead of serine, valine for isoleucine, and a C10 fatty amino alcohol instead of the C12 version. AtnB seems to be involved in the selectivity for Ile versus Val by the third module. Moreover, type B, C and D aspercryptins have an additional N-terminal cichorine, acetyl and propionyl group respectively. This is Fatty acid synthase beta subunit aflB from Emericella nidulans (strain FGSC A4 / ATCC 38163 / CBS 112.46 / NRRL 194 / M139) (Aspergillus nidulans).